Consider the following 340-residue polypeptide: Protein RecA (340 aa).

Residue 66–73 coordinates ATP; sequence GPESSGKT.

This sequence belongs to the RecA family.

Its subcellular location is the cytoplasm. Can catalyze the hydrolysis of ATP in the presence of single-stranded DNA, the ATP-dependent uptake of single-stranded DNA by duplex DNA, and the ATP-dependent hybridization of homologous single-stranded DNAs. It interacts with LexA causing its activation and leading to its autocatalytic cleavage. This chain is Protein RecA, found in Rickettsia prowazekii (strain Madrid E).